A 518-amino-acid polypeptide reads, in one-letter code: Cytochrome P450 1A1 (518 aa).

Residues 33–44 (SKPRVPKGLKRL) are mitochondrial targeting signal. O-linked (GlcNAc) serine glycosylation occurs at Ser-71. Phe-228 is a binding site for substrate. Cys-461 provides a ligand contact to heme.

Belongs to the cytochrome P450 family. Interacts with cytosolic chaperones HSP70 and HSP90; this interaction is required for initial targeting to mitochondria. Interacts (via mitochondrial targeting signal) with TOMM40 (via N-terminus); this interaction is required for translocation across the mitochondrial outer membrane. It depends on heme as a cofactor.

The protein localises to the endoplasmic reticulum membrane. It localises to the mitochondrion inner membrane. Its subcellular location is the microsome membrane. The protein resides in the cytoplasm. It catalyses the reaction an organic molecule + reduced [NADPH--hemoprotein reductase] + O2 = an alcohol + oxidized [NADPH--hemoprotein reductase] + H2O + H(+). It carries out the reaction estrone + reduced [NADPH--hemoprotein reductase] + O2 = 2-hydroxyestrone + oxidized [NADPH--hemoprotein reductase] + H2O + H(+). The enzyme catalyses estrone + reduced [NADPH--hemoprotein reductase] + O2 = 4-hydroxyestrone + oxidized [NADPH--hemoprotein reductase] + H2O + H(+). The catalysed reaction is estrone + reduced [NADPH--hemoprotein reductase] + O2 = 6alpha-hydroxyestrone + oxidized [NADPH--hemoprotein reductase] + H2O + H(+). It catalyses the reaction estrone + reduced [NADPH--hemoprotein reductase] + O2 = 15alpha-hydroxyestrone + oxidized [NADPH--hemoprotein reductase] + H2O + H(+). It carries out the reaction estrone + reduced [NADPH--hemoprotein reductase] + O2 = 16alpha-hydroxyestrone + oxidized [NADPH--hemoprotein reductase] + H2O + H(+). The enzyme catalyses 17beta-estradiol + reduced [NADPH--hemoprotein reductase] + O2 = 2-hydroxy-17beta-estradiol + oxidized [NADPH--hemoprotein reductase] + H2O + H(+). The catalysed reaction is 17beta-estradiol + reduced [NADPH--hemoprotein reductase] + O2 = 4-hydroxy-17beta-estradiol + oxidized [NADPH--hemoprotein reductase] + H2O + H(+). It catalyses the reaction 17beta-estradiol + reduced [NADPH--hemoprotein reductase] + O2 = 6alpha-hydroxy-17beta-estradiol + oxidized [NADPH--hemoprotein reductase] + H2O + H(+). It carries out the reaction 17beta-estradiol + reduced [NADPH--hemoprotein reductase] + O2 = 7alpha-hydroxy-17beta-estradiol + oxidized [NADPH--hemoprotein reductase] + H2O + H(+). The enzyme catalyses 17beta-estradiol + reduced [NADPH--hemoprotein reductase] + O2 = 15alpha-hydroxy-17beta-estradiol + oxidized [NADPH--hemoprotein reductase] + H2O + H(+). The catalysed reaction is (5Z,8Z,11Z)-eicosatrienoate + reduced [NADPH--hemoprotein reductase] + O2 = 19-hydroxy-(5Z,8Z,11Z)-eicosatrienoate + oxidized [NADPH--hemoprotein reductase] + H2O + H(+). It catalyses the reaction (5Z,8Z,11Z,14Z)-eicosatetraenoate + reduced [NADPH--hemoprotein reductase] + O2 = 16-hydroxy-(5Z,8Z,11Z,14Z)-eicosatetraenoate + oxidized [NADPH--hemoprotein reductase] + H2O + H(+). It carries out the reaction (5Z,8Z,11Z,14Z)-eicosatetraenoate + reduced [NADPH--hemoprotein reductase] + O2 = 17-hydroxy-(5Z,8Z,11Z,14Z)-eicosatetraenoate + oxidized [NADPH--hemoprotein reductase] + H2O + H(+). The enzyme catalyses (5Z,8Z,11Z,14Z)-eicosatetraenoate + reduced [NADPH--hemoprotein reductase] + O2 = 18-hydroxy-(5Z,8Z,11Z,14Z)-eicosatetraenoate + oxidized [NADPH--hemoprotein reductase] + H2O + H(+). The catalysed reaction is (5Z,8Z,11Z,14Z)-eicosatetraenoate + reduced [NADPH--hemoprotein reductase] + O2 = 19-hydroxy-(5Z,8Z,11Z,14Z)-eicosatetraenoate + oxidized [NADPH--hemoprotein reductase] + H2O + H(+). It catalyses the reaction (5Z,8Z,11Z,14Z,17Z)-eicosapentaenoate + reduced [NADPH--hemoprotein reductase] + O2 = 19-hydroxy-(5Z,8Z,11Z,14Z,17Z)-eicosapentaenoate + oxidized [NADPH--hemoprotein reductase] + H2O + H(+). It carries out the reaction (5Z,8Z,11Z,14Z)-eicosatetraenoate + reduced [NADPH--hemoprotein reductase] + O2 = (8R,9S)-epoxy-(5Z,11Z,14Z)-eicosatrienoate + oxidized [NADPH--hemoprotein reductase] + H2O + H(+). The enzyme catalyses (5Z,8Z,11Z,14Z)-eicosatetraenoate + reduced [NADPH--hemoprotein reductase] + O2 = (11R,12S)-epoxy-(5Z,8Z,14Z)-eicosatrienoate + oxidized [NADPH--hemoprotein reductase] + H2O + H(+). The catalysed reaction is (5Z,8Z,11Z,14Z)-eicosatetraenoate + reduced [NADPH--hemoprotein reductase] + O2 = (14S,15R)-epoxy-(5Z,8Z,11Z)-eicosatrienoate + oxidized [NADPH--hemoprotein reductase] + H2O + H(+). It catalyses the reaction (5Z,8Z,11Z,14Z)-eicosatetraenoate + reduced [NADPH--hemoprotein reductase] + O2 = (14R,15S)-epoxy-(5Z,8Z,11Z)-eicosatrienoate + oxidized [NADPH--hemoprotein reductase] + H2O + H(+). It carries out the reaction (5Z,8Z,11Z,14Z,17Z)-eicosapentaenoate + reduced [NADPH--hemoprotein reductase] + O2 = (17R,18S)-epoxy-(5Z,8Z,11Z,14Z)-eicosatetraenoate + oxidized [NADPH--hemoprotein reductase] + H2O + H(+). The enzyme catalyses (4Z,7Z,10Z,13Z,16Z,19Z)-docosahexaenoate + reduced [NADPH--hemoprotein reductase] + O2 = (19S,20R)-epoxy-(4Z,7Z,10Z,13Z,16Z)-docosapentaenoate + oxidized [NADPH--hemoprotein reductase] + H2O + H(+). The catalysed reaction is (4Z,7Z,10Z,13Z,16Z,19Z)-docosahexaenoate + reduced [NADPH--hemoprotein reductase] + O2 = (19R,20S)-epoxy-(4Z,7Z,10Z,13Z,16Z)-docosapentaenoate + oxidized [NADPH--hemoprotein reductase] + H2O + H(+). It catalyses the reaction all-trans-retinol + reduced [NADPH--hemoprotein reductase] + O2 = all-trans-retinal + oxidized [NADPH--hemoprotein reductase] + 2 H2O + H(+). It carries out the reaction all-trans-retinal + reduced [NADPH--hemoprotein reductase] + O2 = all-trans-retinoate + oxidized [NADPH--hemoprotein reductase] + H2O + 2 H(+). The enzyme catalyses (13S)-hydroperoxy-(9Z,11E)-octadecadienoate = 13-oxo-(9Z,11E)-octadecadienoate + H2O. The catalysed reaction is (12S)-hydroperoxy-(5Z,8Z,10E,14Z)-eicosatetraenoate = 12-oxo-(5Z,8Z,10E,14Z)-eicosatetraenoate + H2O. It catalyses the reaction (15S)-hydroperoxy-(5Z,8Z,11Z,13E)-eicosatetraenoate = 15-oxo-(5Z,8Z,11Z,13E)-eicosatetraenoate + H2O. It carries out the reaction (5S)-hydroperoxy-(6E,8Z,11Z,14Z)-eicosatetraenoate = 5-oxo-(6E,8Z,11Z,14Z)-eicosatetraenoate + H2O. The protein operates within steroid hormone biosynthesis. It participates in lipid metabolism; fatty acid metabolism. It functions in the pathway cofactor metabolism; retinol metabolism. Its function is as follows. A cytochrome P450 monooxygenase involved in the metabolism of various endogenous substrates, including fatty acids, steroid hormones and vitamins. Mechanistically, uses molecular oxygen inserting one oxygen atom into a substrate, and reducing the second into a water molecule, with two electrons provided by NADPH via cytochrome P450 reductase (CPR; NADPH-ferrihemoprotein reductase). Catalyzes the hydroxylation of carbon-hydrogen bonds. Exhibits high catalytic activity for the formation of hydroxyestrogens from estrone (E1) and 17beta-estradiol (E2), namely 2-hydroxy E1 and E2, as well as D-ring hydroxylated E1 and E2 at the C15alpha and C16alpha positions. Displays different regioselectivities for polyunsaturated fatty acids (PUFA) hydroxylation. Catalyzes the epoxidation of double bonds of certain PUFA. Converts arachidonic acid toward epoxyeicosatrienoic acid (EET) regioisomers, 8,9-, 11,12-, and 14,15-EET, that function as lipid mediators in the vascular system. Displays an absolute stereoselectivity in the epoxidation of eicosapentaenoic acid (EPA) producing the 17(R),18(S) enantiomer. May play an important role in all-trans retinoic acid biosynthesis in extrahepatic tissues. Catalyzes two successive oxidative transformation of all-trans retinol to all-trans retinal and then to the active form all-trans retinoic acid. May also participate in eicosanoids metabolism by converting hydroperoxide species into oxo metabolites (lipoxygenase-like reaction, NADPH-independent). The protein is Cytochrome P450 1A1 (CYP1A1) of Oryctolagus cuniculus (Rabbit).